Here is a 347-residue protein sequence, read N- to C-terminus: Biotin synthase (347 aa).

One can recognise a Radical SAM core domain in the interval 54–273 (NHVETASLLS…IAVARIMMPK (220 aa)). [4Fe-4S] cluster is bound by residues Cys69, Cys73, and Cys76. Cys113, Cys144, Cys204, and Arg277 together coordinate [2Fe-2S] cluster.

The protein belongs to the radical SAM superfamily. Biotin synthase family. As to quaternary structure, homodimer. The cofactor is [4Fe-4S] cluster. [2Fe-2S] cluster is required as a cofactor.

The catalysed reaction is (4R,5S)-dethiobiotin + (sulfur carrier)-SH + 2 reduced [2Fe-2S]-[ferredoxin] + 2 S-adenosyl-L-methionine = (sulfur carrier)-H + biotin + 2 5'-deoxyadenosine + 2 L-methionine + 2 oxidized [2Fe-2S]-[ferredoxin]. It functions in the pathway cofactor biosynthesis; biotin biosynthesis; biotin from 7,8-diaminononanoate: step 2/2. Its function is as follows. Catalyzes the conversion of dethiobiotin (DTB) to biotin by the insertion of a sulfur atom into dethiobiotin via a radical-based mechanism. This Afipia carboxidovorans (strain ATCC 49405 / DSM 1227 / KCTC 32145 / OM5) (Oligotropha carboxidovorans) protein is Biotin synthase.